A 378-amino-acid polypeptide reads, in one-letter code: Erythronate-4-phosphate dehydrogenase (378 aa).

Residues Ser-45 and Thr-66 each contribute to the substrate site. Residues Asp-146 and Thr-175 each contribute to the NAD(+) site. Residue Arg-208 is part of the active site. NAD(+) is bound at residue Asp-232. Glu-237 is an active-site residue. The active-site Proton donor is the His-254. Gly-257 provides a ligand contact to NAD(+). Tyr-258 serves as a coordination point for substrate.

The protein belongs to the D-isomer specific 2-hydroxyacid dehydrogenase family. PdxB subfamily. Homodimer.

It is found in the cytoplasm. The enzyme catalyses 4-phospho-D-erythronate + NAD(+) = (R)-3-hydroxy-2-oxo-4-phosphooxybutanoate + NADH + H(+). Its pathway is cofactor biosynthesis; pyridoxine 5'-phosphate biosynthesis; pyridoxine 5'-phosphate from D-erythrose 4-phosphate: step 2/5. Its function is as follows. Catalyzes the oxidation of erythronate-4-phosphate to 3-hydroxy-2-oxo-4-phosphonooxybutanoate. This Escherichia coli O45:K1 (strain S88 / ExPEC) protein is Erythronate-4-phosphate dehydrogenase.